Reading from the N-terminus, the 184-residue chain is NADH-quinone oxidoreductase subunit B (184 aa).

Positions 37, 38, 103, and 132 each coordinate [4Fe-4S] cluster.

This sequence belongs to the complex I 20 kDa subunit family. In terms of assembly, NDH-1 is composed of 14 different subunits. Subunits NuoB, C, D, E, F, and G constitute the peripheral sector of the complex. Requires [4Fe-4S] cluster as cofactor.

The protein localises to the cell membrane. It carries out the reaction a quinone + NADH + 5 H(+)(in) = a quinol + NAD(+) + 4 H(+)(out). In terms of biological role, NDH-1 shuttles electrons from NADH, via FMN and iron-sulfur (Fe-S) centers, to quinones in the respiratory chain. The immediate electron acceptor for the enzyme in this species is believed to be a menaquinone. Couples the redox reaction to proton translocation (for every two electrons transferred, four hydrogen ions are translocated across the cytoplasmic membrane), and thus conserves the redox energy in a proton gradient. The protein is NADH-quinone oxidoreductase subunit B of Rhodococcus erythropolis (strain PR4 / NBRC 100887).